Here is a 299-residue protein sequence, read N- to C-terminus: ATP phosphoribosyltransferase (299 aa).

The protein belongs to the ATP phosphoribosyltransferase family. Long subfamily. As to quaternary structure, equilibrium between an active dimeric form, an inactive hexameric form and higher aggregates. Interconversion between the various forms is largely reversible and is influenced by the natural substrates and inhibitors of the enzyme. Mg(2+) serves as cofactor.

The protein localises to the cytoplasm. The catalysed reaction is 1-(5-phospho-beta-D-ribosyl)-ATP + diphosphate = 5-phospho-alpha-D-ribose 1-diphosphate + ATP. The protein operates within amino-acid biosynthesis; L-histidine biosynthesis; L-histidine from 5-phospho-alpha-D-ribose 1-diphosphate: step 1/9. With respect to regulation, feedback inhibited by histidine. Its function is as follows. Catalyzes the condensation of ATP and 5-phosphoribose 1-diphosphate to form N'-(5'-phosphoribosyl)-ATP (PR-ATP). Has a crucial role in the pathway because the rate of histidine biosynthesis seems to be controlled primarily by regulation of HisG enzymatic activity. The chain is ATP phosphoribosyltransferase from Serratia proteamaculans (strain 568).